We begin with the raw amino-acid sequence, 270 residues long: Protein tonB2 (270 aa).

Residues 1–51 (MATPQPVDARTQPWRETPGGDLVALGRPVRQALHLVRHNPAQGRVLSRRET) are Cytoplasmic-facing. A helical transmembrane segment spans residues 52–69 (ILLVLFALTLHGAVIHWL). At 70–270 (SQQRTPALPE…VSVPIDFKLN (201 aa)) the chain is on the periplasmic side. The disordered stretch occupies residues 80–187 (VPPQVPPMTI…LTPPSANAGY (108 aa)). The segment covering 94–118 (PAPPVVEPPPPEPLPPVVEEPPPPV) has biased composition (pro residues). Basic residues predominate over residues 133 to 143 (PKPKPKPKPQP). Over residues 144–180 (RPKPAPKAVEPAPPAPPQPAAPPAPPAPAAAPAPLTP) the composition is skewed to pro residues. Residues 180 to 270 (PPSANAGYLH…VSVPIDFKLN (91 aa)) enclose the TonB C-terminal domain.

This sequence belongs to the TonB family. In terms of assembly, homodimer. Forms a complex with the accessory proteins ExbB and ExbD.

It localises to the cell inner membrane. Its function is as follows. Interacts with outer membrane receptor proteins that carry out high-affinity binding and energy dependent uptake into the periplasmic space of specific substrates. It could act to transduce energy from the cytoplasmic membrane to specific energy-requiring processes in the outer membrane, resulting in the release into the periplasm of ligands bound by these outer membrane proteins. In Pseudomonas aeruginosa (strain ATCC 15692 / DSM 22644 / CIP 104116 / JCM 14847 / LMG 12228 / 1C / PRS 101 / PAO1), this protein is Protein tonB2 (tonB2).